Reading from the N-terminus, the 576-residue chain is Putative export ATP-binding/permease protein RC1073 (576 aa).

One can recognise an ABC transmembrane type-1 domain in the interval 20–303; that stretch reads LIIVMISLLS…IFELLSEMHL (284 aa). Helical transmembrane passes span 21–41, 57–77, 135–155, 158–178, 242–262, and 277–297; these read IIVMISLLSVSASLLLIGSVF, VDNSILYICLLIIILSIASFF, FLSFFIRNSVMLIGSITLMFF, FKLASIVIITIPILLIPLIKF, ALFFAISIAVIFLAITLVVWI, and IISFIYYAIIAGVSCGGIFEL. The 237-residue stretch at 336-572 folds into the ABC transporter domain; that stretch reads IEFKNVDFTY…SEIYRNICRE (237 aa). 371–378 contributes to the ATP binding site; sequence GRSGAGKS.

The protein belongs to the ABC transporter superfamily. As to quaternary structure, homodimer.

Its subcellular location is the cell inner membrane. Part of an ABC transporter complex. Transmembrane domains (TMD) form a pore in the inner membrane and the ATP-binding domain (NBD) is responsible for energy generation. In Rickettsia conorii (strain ATCC VR-613 / Malish 7), this protein is Putative export ATP-binding/permease protein RC1073.